Consider the following 570-residue polypeptide: Small ribosomal subunit protein uS2c (570 aa).

An N-terminal extension region spans residues 1–306 (MLNKKPPYLI…IKLNPLSTPQ (306 aa)). 2 consecutive TRAM domains span residues 28 to 89 (KLIP…KLIK) and 104 to 169 (ALTP…VATV).

Belongs to the universal ribosomal protein uS2 family.

The protein resides in the plastid. It is found in the chloroplast. This chain is Small ribosomal subunit protein uS2c (rps2-1), found in Chlamydomonas reinhardtii (Chlamydomonas smithii).